Reading from the N-terminus, the 343-residue chain is Homeobox-leucine zipper protein HOX16 (343 aa).

Positions 74–133 form a DNA-binding region, homeobox; it reads LPEKKRRLTPEQVHLLERSFEEENKLEPERKTELARKLGLQPRQVAVWFQNRRARWKTKQ. The interval 132-176 is leucine-zipper; it reads KQLERDFDRLKASFDALRADHDALLQDNHRLHSQVMSLTEKLQEK. Residues 218 to 239 form a disordered region; that stretch reads FEEQQEQQVKAEDRLSTGSGGS.

The protein belongs to the HD-ZIP homeobox family. Class I subfamily. In terms of tissue distribution, expressed in seedlings, stems, leaf sheaths and blades and panicles.

It is found in the nucleus. Functionally, probable transcription factor. This is Homeobox-leucine zipper protein HOX16 (HOX16) from Oryza sativa subsp. japonica (Rice).